The sequence spans 276 residues: NAD kinase (276 aa).

The active-site Proton acceptor is D67. Residues D67–G68, R72, N136–D137, K147, R164, D166, T177–S182, A201, and Q235 contribute to the NAD(+) site.

The protein belongs to the NAD kinase family. Requires a divalent metal cation as cofactor.

The protein resides in the cytoplasm. The catalysed reaction is NAD(+) + ATP = ADP + NADP(+) + H(+). In terms of biological role, involved in the regulation of the intracellular balance of NAD and NADP, and is a key enzyme in the biosynthesis of NADP. Catalyzes specifically the phosphorylation on 2'-hydroxyl of the adenosine moiety of NAD to yield NADP. This is NAD kinase from Thermococcus sibiricus (strain DSM 12597 / MM 739).